The primary structure comprises 139 residues: Putative pre-16S rRNA nuclease (139 aa).

Belongs to the YqgF nuclease family.

It is found in the cytoplasm. In terms of biological role, could be a nuclease involved in processing of the 5'-end of pre-16S rRNA. The sequence is that of Putative pre-16S rRNA nuclease from Streptococcus pyogenes serotype M2 (strain MGAS10270).